Consider the following 104-residue polypeptide: Large ribosomal subunit protein bL21 (104 aa).

Belongs to the bacterial ribosomal protein bL21 family. Part of the 50S ribosomal subunit. Contacts protein L20.

In terms of biological role, this protein binds to 23S rRNA in the presence of protein L20. This is Large ribosomal subunit protein bL21 from Azobacteroides pseudotrichonymphae genomovar. CFP2.